We begin with the raw amino-acid sequence, 229 residues long: ACD11 homolog protein (229 aa).

An N-acylsphingoid base 1-phosphate contacts are provided by E84, K88, R123, R127, and H166.

Belongs to the GLTP family.

This chain is ACD11 homolog protein, found in Arabidopsis thaliana (Mouse-ear cress).